A 391-amino-acid polypeptide reads, in one-letter code: Lipid-A-disaccharide synthase (391 aa).

It belongs to the LpxB family.

The enzyme catalyses a lipid X + a UDP-2-N,3-O-bis[(3R)-3-hydroxyacyl]-alpha-D-glucosamine = a lipid A disaccharide + UDP + H(+). It participates in bacterial outer membrane biogenesis; LPS lipid A biosynthesis. In terms of biological role, condensation of UDP-2,3-diacylglucosamine and 2,3-diacylglucosamine-1-phosphate to form lipid A disaccharide, a precursor of lipid A, a phosphorylated glycolipid that anchors the lipopolysaccharide to the outer membrane of the cell. The polypeptide is Lipid-A-disaccharide synthase (Aromatoleum aromaticum (strain DSM 19018 / LMG 30748 / EbN1) (Azoarcus sp. (strain EbN1))).